A 257-amino-acid polypeptide reads, in one-letter code: 14-3-3-like protein GF14-G (257 aa).

The protein belongs to the 14-3-3 family.

Is associated with a DNA binding complex that binds to the G box, a well-characterized cis-acting DNA regulatory element found in plant genes. This Oryza sativa subsp. japonica (Rice) protein is 14-3-3-like protein GF14-G (GF14G).